We begin with the raw amino-acid sequence, 261 residues long: Glucosamine-6-phosphate deaminase (261 aa).

Catalysis depends on aspartate 67, which acts as the Proton acceptor; for enolization step. The For ring-opening step role is filled by aspartate 136. Residue histidine 138 is the Proton acceptor; for ring-opening step of the active site. Glutamate 143 serves as the catalytic For ring-opening step.

The protein belongs to the glucosamine/galactosamine-6-phosphate isomerase family. NagB subfamily.

The enzyme catalyses alpha-D-glucosamine 6-phosphate + H2O = beta-D-fructose 6-phosphate + NH4(+). It participates in amino-sugar metabolism; N-acetylneuraminate degradation; D-fructose 6-phosphate from N-acetylneuraminate: step 5/5. Catalyzes the reversible isomerization-deamination of glucosamine 6-phosphate (GlcN6P) to form fructose 6-phosphate (Fru6P) and ammonium ion. This is Glucosamine-6-phosphate deaminase from Beutenbergia cavernae (strain ATCC BAA-8 / DSM 12333 / CCUG 43141 / JCM 11478 / NBRC 16432 / NCIMB 13614 / HKI 0122).